The chain runs to 142 residues: Coactosin-like protein (142 aa).

At Ala-2 the chain carries N-acetylalanine. The region spanning 2–130 (ATKIDKEACR…EEDFIKNELK (129 aa)) is the ADF-H domain. The flexible and important for F-actin binding stretch occupies residues 66-75 (TGDAMSKRSK). N6-acetyllysine is present on residues Lys-102 and Lys-126.

The protein belongs to the actin-binding proteins ADF family. Coactosin subfamily. Interacts with 5-lipoxygenase (ALOX5/5LO) in a calcium-independent manner. Binds to F-actin with a stoichiometry of 1:2.

The protein localises to the cytoplasm. It localises to the cytoskeleton. It is found in the nucleus. Its function is as follows. Binds to F-actin in a calcium-independent manner. Has no direct effect on actin depolymerization. Acts as a chaperone for ALOX5 (5LO), influencing both its stability and activity in leukotrienes synthesis. The protein is Coactosin-like protein (COTL1) of Bos taurus (Bovine).